A 177-amino-acid polypeptide reads, in one-letter code: GTP-dependent dephospho-CoA kinase (177 aa).

Residues aspartate 45, valine 46, valine 47, aspartate 64, and glutamate 120 each coordinate GTP.

This sequence belongs to the GTP-dependent DPCK family.

It catalyses the reaction 3'-dephospho-CoA + GTP = GDP + CoA + H(+). Its pathway is cofactor biosynthesis; coenzyme A biosynthesis. Functionally, catalyzes the GTP-dependent phosphorylation of the 3'-hydroxyl group of dephosphocoenzyme A to form coenzyme A (CoA). In Halobacterium salinarum (strain ATCC 29341 / DSM 671 / R1), this protein is GTP-dependent dephospho-CoA kinase.